Consider the following 279-residue polypeptide: Energy-coupling factor transporter ATP-binding protein EcfA2 (279 aa).

The ABC transporter domain maps to 3 to 245 (ITLKNVSYTY…LDFMESIQLG (243 aa)). An ATP-binding site is contributed by 40–47 (GHTGSGKS).

This sequence belongs to the ABC transporter superfamily. Energy-coupling factor EcfA family. In terms of assembly, forms a stable energy-coupling factor (ECF) transporter complex composed of 2 membrane-embedded substrate-binding proteins (S component), 2 ATP-binding proteins (A component) and 2 transmembrane proteins (T component).

It localises to the cell membrane. ATP-binding (A) component of a common energy-coupling factor (ECF) ABC-transporter complex. Unlike classic ABC transporters this ECF transporter provides the energy necessary to transport a number of different substrates. This Streptococcus sanguinis (strain SK36) protein is Energy-coupling factor transporter ATP-binding protein EcfA2.